Reading from the N-terminus, the 541-residue chain is Malate synthase (541 aa).

The active-site Proton acceptor is the Arg172. The Proton donor role is filled by Asp452.

It belongs to the malate synthase family.

The protein localises to the cytoplasm. It carries out the reaction glyoxylate + acetyl-CoA + H2O = (S)-malate + CoA + H(+). It functions in the pathway carbohydrate metabolism; glyoxylate cycle; (S)-malate from isocitrate: step 2/2. The polypeptide is Malate synthase (mls) (Myxococcus xanthus (strain DK1622)).